The chain runs to 234 residues: LexA repressor (234 aa).

The H-T-H motif DNA-binding region spans 26-46 (FDEMKEALDLASKSGIHRLIT). Positions 73 to 107 (ATAAAPPKGRGAFRPQVFEGGGAPPPAASPAAAAN) are disordered. Catalysis depends on for autocatalytic cleavage activity residues Ser-155 and Lys-192.

Belongs to the peptidase S24 family. Homodimer.

It carries out the reaction Hydrolysis of Ala-|-Gly bond in repressor LexA.. In terms of biological role, represses a number of genes involved in the response to DNA damage (SOS response), including recA and lexA. In the presence of single-stranded DNA, RecA interacts with LexA causing an autocatalytic cleavage which disrupts the DNA-binding part of LexA, leading to derepression of the SOS regulon and eventually DNA repair. This chain is LexA repressor, found in Caulobacter vibrioides (strain ATCC 19089 / CIP 103742 / CB 15) (Caulobacter crescentus).